The sequence spans 373 residues: D-alanine--D-alanine ligase A (373 aa).

The ATP-grasp domain maps to 146–355 (KRLAEFAGIP…YGELLSRLVD (210 aa)). 179-234 (VEGLSLPVFVKPCNMGSSVGIHKVKTQDALEAALDDAFRYDVKVLVQQGIDAREIE) serves as a coordination point for ATP. The Mg(2+) site is built by D308, E322, and N324.

The protein belongs to the D-alanine--D-alanine ligase family. It depends on Mg(2+) as a cofactor. Mn(2+) serves as cofactor.

It is found in the cytoplasm. It catalyses the reaction 2 D-alanine + ATP = D-alanyl-D-alanine + ADP + phosphate + H(+). The protein operates within cell wall biogenesis; peptidoglycan biosynthesis. Cell wall formation. This is D-alanine--D-alanine ligase A from Bradyrhizobium diazoefficiens (strain JCM 10833 / BCRC 13528 / IAM 13628 / NBRC 14792 / USDA 110).